The sequence spans 1320 residues: Bifunctional protein PutA (1320 aa).

Residues 228-574 (LSRSLNRIIG…SFVNRIADAT (347 aa)) form a proline dehydrogenase region. An aldehyde dehydrogenase region spans residues 653–1119 (QPVADGEMTP…LAHRPPNALN (467 aa)). Residues E883 and C917 contribute to the active site.

It in the N-terminal section; belongs to the proline dehydrogenase family. In the C-terminal section; belongs to the aldehyde dehydrogenase family. Requires FAD as cofactor.

It catalyses the reaction L-proline + a quinone = (S)-1-pyrroline-5-carboxylate + a quinol + H(+). It carries out the reaction L-glutamate 5-semialdehyde + NAD(+) + H2O = L-glutamate + NADH + 2 H(+). Its pathway is amino-acid degradation; L-proline degradation into L-glutamate; L-glutamate from L-proline: step 1/2. It participates in amino-acid degradation; L-proline degradation into L-glutamate; L-glutamate from L-proline: step 2/2. Oxidizes proline to glutamate for use as a carbon and nitrogen source and also function as a transcriptional repressor of the put operon. The protein is Bifunctional protein PutA (putA) of Salmonella typhimurium (strain LT2 / SGSC1412 / ATCC 700720).